Here is a 296-residue protein sequence, read N- to C-terminus: Phosphatidylglycerol--prolipoprotein diacylglyceryl transferase (296 aa).

3 helical membrane-spanning segments follow: residues 17-37 (LAVR…IVVG), 59-79 (MMFY…VLFY), and 97-117 (GGMS…LFAW). Arginine 142 serves as a coordination point for a 1,2-diacyl-sn-glycero-3-phospho-(1'-sn-glycerol). Transmembrane regions (helical) follow at residues 230–250 (MGAV…TVEF) and 257–277 (FLGL…PMIL).

This sequence belongs to the Lgt family.

It localises to the cell inner membrane. The catalysed reaction is L-cysteinyl-[prolipoprotein] + a 1,2-diacyl-sn-glycero-3-phospho-(1'-sn-glycerol) = an S-1,2-diacyl-sn-glyceryl-L-cysteinyl-[prolipoprotein] + sn-glycerol 1-phosphate + H(+). Its pathway is protein modification; lipoprotein biosynthesis (diacylglyceryl transfer). In terms of biological role, catalyzes the transfer of the diacylglyceryl group from phosphatidylglycerol to the sulfhydryl group of the N-terminal cysteine of a prolipoprotein, the first step in the formation of mature lipoproteins. The protein is Phosphatidylglycerol--prolipoprotein diacylglyceryl transferase of Burkholderia lata (strain ATCC 17760 / DSM 23089 / LMG 22485 / NCIMB 9086 / R18194 / 383).